We begin with the raw amino-acid sequence, 313 residues long: 4-hydroxy-3-methylbut-2-enyl diphosphate reductase (313 aa).

Cysteine 12 is a [4Fe-4S] cluster binding site. Positions 41 and 74 each coordinate (2E)-4-hydroxy-3-methylbut-2-enyl diphosphate. Residues histidine 41 and histidine 74 each contribute to the dimethylallyl diphosphate site. Isopentenyl diphosphate-binding residues include histidine 41 and histidine 74. Cysteine 96 provides a ligand contact to [4Fe-4S] cluster. A (2E)-4-hydroxy-3-methylbut-2-enyl diphosphate-binding site is contributed by histidine 124. Residue histidine 124 coordinates dimethylallyl diphosphate. Residue histidine 124 participates in isopentenyl diphosphate binding. The active-site Proton donor is the glutamate 126. Threonine 167 is a (2E)-4-hydroxy-3-methylbut-2-enyl diphosphate binding site. Cysteine 197 lines the [4Fe-4S] cluster pocket. Positions 225, 226, 227, and 269 each coordinate (2E)-4-hydroxy-3-methylbut-2-enyl diphosphate. Dimethylallyl diphosphate-binding residues include serine 225, serine 226, asparagine 227, and serine 269. Isopentenyl diphosphate contacts are provided by serine 225, serine 226, asparagine 227, and serine 269.

Belongs to the IspH family. The cofactor is [4Fe-4S] cluster.

The enzyme catalyses isopentenyl diphosphate + 2 oxidized [2Fe-2S]-[ferredoxin] + H2O = (2E)-4-hydroxy-3-methylbut-2-enyl diphosphate + 2 reduced [2Fe-2S]-[ferredoxin] + 2 H(+). It carries out the reaction dimethylallyl diphosphate + 2 oxidized [2Fe-2S]-[ferredoxin] + H2O = (2E)-4-hydroxy-3-methylbut-2-enyl diphosphate + 2 reduced [2Fe-2S]-[ferredoxin] + 2 H(+). It participates in isoprenoid biosynthesis; dimethylallyl diphosphate biosynthesis; dimethylallyl diphosphate from (2E)-4-hydroxy-3-methylbutenyl diphosphate: step 1/1. It functions in the pathway isoprenoid biosynthesis; isopentenyl diphosphate biosynthesis via DXP pathway; isopentenyl diphosphate from 1-deoxy-D-xylulose 5-phosphate: step 6/6. Catalyzes the conversion of 1-hydroxy-2-methyl-2-(E)-butenyl 4-diphosphate (HMBPP) into a mixture of isopentenyl diphosphate (IPP) and dimethylallyl diphosphate (DMAPP). Acts in the terminal step of the DOXP/MEP pathway for isoprenoid precursor biosynthesis. The sequence is that of 4-hydroxy-3-methylbut-2-enyl diphosphate reductase from Photobacterium profundum (strain SS9).